The sequence spans 166 residues: PTS system glucose-specific EIIA component (166 aa).

The PTS EIIA type-1 domain maps to 34-138 (DPVFAQKMMG…SVISPIIITN (105 aa)). Zn(2+) contacts are provided by histidine 71 and histidine 86. Histidine 86 serves as the catalytic Tele-phosphohistidine intermediate; for EIIA activity. Residue histidine 86 is modified to Phosphohistidine; by HPr.

As to quaternary structure, heterodimer with glycerol kinase (glpk). It depends on Zn(2+) as a cofactor.

The protein resides in the cytoplasm. In terms of biological role, the phosphoenolpyruvate-dependent sugar phosphotransferase system (sugar PTS), a major carbohydrate active transport system, catalyzes the phosphorylation of incoming sugar substrates concomitantly with their translocation across the cell membrane. The enzyme II complex composed of PtsG and Crr is involved in glucose transport. In Staphylococcus aureus (strain Mu50 / ATCC 700699), this protein is PTS system glucose-specific EIIA component (crr).